A 624-amino-acid chain; its full sequence is Glutamine--fructose-6-phosphate aminotransferase [isomerizing] (624 aa).

The active-site Nucleophile; for GATase activity is C2. Residues 2–225 (CGIVGYVGRR…QDQAVVITAD (224 aa)) enclose the Glutamine amidotransferase type-2 domain. SIS domains are found at residues 297-436 (SDQE…ARGT) and 469-614 (LAHR…VDKP). K619 serves as the catalytic For Fru-6P isomerization activity.

In terms of assembly, homodimer.

The protein resides in the cytoplasm. It catalyses the reaction D-fructose 6-phosphate + L-glutamine = D-glucosamine 6-phosphate + L-glutamate. Catalyzes the first step in hexosamine metabolism, converting fructose-6P into glucosamine-6P using glutamine as a nitrogen source. This Mycobacterium bovis (strain ATCC BAA-935 / AF2122/97) protein is Glutamine--fructose-6-phosphate aminotransferase [isomerizing].